A 339-amino-acid polypeptide reads, in one-letter code: DNA-directed RNA polymerase subunit alpha (339 aa).

The tract at residues 1 to 235 (MVREEVAVST…DLFIPFLHGE (235 aa)) is alpha N-terminal domain (alpha-NTD). Residues 267-339 (KAIALECIFI…FTIDLPKNKF (73 aa)) form an alpha C-terminal domain (alpha-CTD) region.

This sequence belongs to the RNA polymerase alpha chain family. In terms of assembly, in plastids the minimal PEP RNA polymerase catalytic core is composed of four subunits: alpha, beta, beta', and beta''. When a (nuclear-encoded) sigma factor is associated with the core the holoenzyme is formed, which can initiate transcription.

The protein resides in the plastid. Its subcellular location is the chloroplast. The catalysed reaction is RNA(n) + a ribonucleoside 5'-triphosphate = RNA(n+1) + diphosphate. In terms of biological role, DNA-dependent RNA polymerase catalyzes the transcription of DNA into RNA using the four ribonucleoside triphosphates as substrates. The protein is DNA-directed RNA polymerase subunit alpha of Drimys granadensis.